Consider the following 456-residue polypeptide: tRNA-2-methylthio-N(6)-dimethylallyladenosine synthase (456 aa).

The MTTase N-terminal domain maps to 18–136; sequence EFFFIQTFGC…FPEYLHRVQV (119 aa). [4Fe-4S] cluster is bound by residues Cys27, Cys63, Cys97, Cys173, Cys177, and Cys180. A Radical SAM core domain is found at 159–391; sequence RKSNVKAFVT…AVNEGIVVGN (233 aa). Residues 392 to 455 enclose the TRAM domain; sequence KAAEGKIYEV…SFSLVGEVVE (64 aa).

The protein belongs to the methylthiotransferase family. MiaB subfamily. Monomer. It depends on [4Fe-4S] cluster as a cofactor.

Its subcellular location is the cytoplasm. It catalyses the reaction N(6)-dimethylallyladenosine(37) in tRNA + (sulfur carrier)-SH + AH2 + 2 S-adenosyl-L-methionine = 2-methylsulfanyl-N(6)-dimethylallyladenosine(37) in tRNA + (sulfur carrier)-H + 5'-deoxyadenosine + L-methionine + A + S-adenosyl-L-homocysteine + 2 H(+). Functionally, catalyzes the methylthiolation of N6-(dimethylallyl)adenosine (i(6)A), leading to the formation of 2-methylthio-N6-(dimethylallyl)adenosine (ms(2)i(6)A) at position 37 in tRNAs that read codons beginning with uridine. The polypeptide is tRNA-2-methylthio-N(6)-dimethylallyladenosine synthase (Clostridium botulinum (strain Alaska E43 / Type E3)).